The sequence spans 796 residues: Vacuolar protein sorting-associated protein 35 (796 aa).

Serine 7 is subject to Phosphoserine. Interaction with SNX3 regions lie at residues 25-44 (VQSF…DALK) and 205-215 (DREKRERERQE). Residues 438–796 (CYVLSNVLDY…EGPIYEGLIL (359 aa)) are interaction with SLC11A2. Positions 500 to 693 (SEDPDQQYLI…DKNGEELHGG (194 aa)) are interaction with IGF2R cytoplasmic domain. Phosphoserine is present on serine 783. Tyrosine 791 is subject to Phosphotyrosine.

It belongs to the VPS35 family. Component of the heterotrimeric retromer cargo-selective complex (CSC), also decribed as vacuolar protein sorting subcomplex (VPS), formed by VPS26 (VPS26A or VPS26B), VPS29 and VPS35. The CSC has a highly elongated structure with VPS26 and VPS29 binding independently at opposite distal ends of VPS35 as central platform. The CSC is believed to associate with variable sorting nexins to form functionally distinct retromer complex variants. The originally described retromer complex (also called SNX-BAR retromer) is a pentamer containing the CSC and a heterodimeric membrane-deforming subcomplex formed between SNX1 or SNX2 and SNX5 or SNX6 (also called SNX-BAR subcomplex); the respective CSC and SNX-BAR subcomplexes associate with low affinity. The CSC associates with SNX3 to form a SNX3-retromer complex. The CSC associates with SNX27, the WASH complex and the SNX-BAR subcomplex to form the SNX27-retromer complex. Interacts with VPS26A, VPS26B, VPS29, SNX1, SNX2, IGF2R, SNX3, GOLPH3, LRRK2, SLC11A2, WASHC2A, WASHC2C, FKBP15, WASHC1, RAB7A, SNX27, WASHC5, EHD1. Interacts with MAGEL2; leading to recruitment of the TRIM27:MAGEL2 E3 ubiquitin ligase complex retromer-containing endosomes. Interacts with SORCS2. In terms of assembly, (Microbial infection) Interacts with human papillomavirus 16 minor capsid protein L2 (via C-terminus); this interaction mediates the transport of the capsid from the early endosome to the Golgi apparatus. Ubiquitous. Highly expressed in heart, brain, placenta, skeletal muscle, spleen, thymus, testis, ovary, small intestine, kidney and colon.

It is found in the cytoplasm. It localises to the membrane. The protein localises to the endosome. Its subcellular location is the early endosome. The protein resides in the late endosome. In terms of biological role, acts as a component of the retromer cargo-selective complex (CSC). The CSC is believed to be the core functional component of retromer or respective retromer complex variants acting to prevent missorting of selected transmembrane cargo proteins into the lysosomal degradation pathway. The recruitment of the CSC to the endosomal membrane involves RAB7A and SNX3. The CSC seems to associate with the cytoplasmic domain of cargo proteins predominantly via VPS35; however, these interactions seem to be of low affinity and retromer SNX proteins may also contribute to cargo selectivity thus questioning the classical function of the CSC. The SNX-BAR retromer mediates retrograde transport of cargo proteins from endosomes to the trans-Golgi network (TGN) and is involved in endosome-to-plasma membrane transport for cargo protein recycling. The SNX3-retromer mediates the retrograde endosome-to-TGN transport of WLS distinct from the SNX-BAR retromer pathway. The SNX27-retromer is believed to be involved in endosome-to-plasma membrane trafficking and recycling of a broad spectrum of cargo proteins. The CSC seems to act as recruitment hub for other proteins, such as the WASH complex and TBC1D5. Required for retrograde transport of lysosomal enzyme receptor IGF2R and SLC11A2. Required to regulate transcytosis of the polymeric immunoglobulin receptor (pIgR-pIgA). Required for endosomal localization of WASHC2C. Mediates the association of the CSC with the WASH complex via WASHC2. Required for the endosomal localization of TBC1D5. (Microbial infection) The heterotrimeric retromer cargo-selective complex (CSC) mediates the exit of human papillomavirus from the early endosome and the delivery to the Golgi apparatus. This is Vacuolar protein sorting-associated protein 35 from Homo sapiens (Human).